The sequence spans 747 residues: Sex-specific storage-protein 1 (747 aa).

The signal sequence occupies residues 1–15 (MRVLVLLACLAAASA). 2 N-linked (GlcNAc...) asparagine glycosylation sites follow: Asn494 and Asn706.

The protein belongs to the hemocyanin family. Fat body.

The protein localises to the secreted. Its subcellular location is the extracellular space. Larval storage protein (LSP) which may serve as a store of amino acids for synthesis of adult proteins. This is Sex-specific storage-protein 1 (SP1) from Bombyx mori (Silk moth).